Reading from the N-terminus, the 103-residue chain is Astacin-like peptidase p16 (103 aa).

Residues Asn-1 to Met-103 enclose the Peptidase M12A domain.

It depends on Zn(2+) as a cofactor.

Active against casein. Has a role as a digestive enzyme. This is Astacin-like peptidase p16 from Argiope aurantia (Black-and-yellow garden spider).